Consider the following 133-residue polypeptide: Large ribosomal subunit protein uL14 (133 aa).

It belongs to the universal ribosomal protein uL14 family. In terms of assembly, part of the 50S ribosomal subunit. Forms a cluster with proteins L3 and L24e, part of which may contact the 16S rRNA in 2 intersubunit bridges.

Functionally, binds to 23S rRNA. Forms part of two intersubunit bridges in the 70S ribosome. The polypeptide is Large ribosomal subunit protein uL14 (Methanopyrus kandleri (strain AV19 / DSM 6324 / JCM 9639 / NBRC 100938)).